The chain runs to 156 residues: uncharacterized protein (156 aa).

A run of 3 helical transmembrane segments spans residues Leu42–Val59, Ala79–Tyr98, and Ser105–Ile127.

The protein resides in the cell membrane. This is an uncharacterized protein from Archaeoglobus fulgidus (strain ATCC 49558 / DSM 4304 / JCM 9628 / NBRC 100126 / VC-16).